The primary structure comprises 1029 residues: Chitin synthase 2 (1029 aa).

Disordered stretches follow at residues 1–160 (MDRP…GARS), 174–216 (SDVD…SHLR), and 234–257 (AHYGPAPAEGDQQRRGVREPQKSR). Residues 61 to 77 (PSVSSIHSRPSSISNIP) show a composition bias toward low complexity. Residues 244–257 (DQQRRGVREPQKSR) show a composition bias toward basic and acidic residues. Residue N348 is glycosylated (N-linked (GlcNAc...) asparagine). Helical transmembrane passes span 639-659 (WLNGAFFAAIYSLVHFRQLWA), 681-701 (VLFTFFSLANFYLTFYFVAGG), 716-736 (LYIFTILRYTLILLICAQFIL), 752-772 (SMVIYGIVMVYTTFAAFYIVI), 791-811 (NLIVSMASTIGLYFLMSFIYL), 820-840 (SIQYFMLLPSYLCTLQVYAFC), 918-938 (YMVVSWMIANGILGMAVSEIY), and 952-972 (ILWSVASLALFRALGSTTFAI).

The protein belongs to the chitin synthase family. Class II subfamily.

The protein localises to the cell membrane. It carries out the reaction [(1-&gt;4)-N-acetyl-beta-D-glucosaminyl](n) + UDP-N-acetyl-alpha-D-glucosamine = [(1-&gt;4)-N-acetyl-beta-D-glucosaminyl](n+1) + UDP + H(+). In terms of biological role, polymerizes chitin, a structural polymer of the cell wall and septum, by transferring the sugar moiety of UDP-GlcNAc to the non-reducing end of the growing chitin polymer. Plays an important role in cell wall integrity and has distinct functions in invasive hyphae and vegetative hyphae, but is not involved in plant infection. In Pyricularia oryzae (strain 70-15 / ATCC MYA-4617 / FGSC 8958) (Rice blast fungus), this protein is Chitin synthase 2.